The primary structure comprises 140 residues: Histone H2B (140 aa).

Residues Met-1–Pro-10 are compositionally biased toward basic and acidic residues. Residues Met-1 to Lys-48 form a disordered region. N6-acetyllysine; alternate occurs at positions 8 and 9. Glycyl lysine isopeptide (Lys-Gly) (interchain with G-Cter in SUMO); alternate cross-links involve residues Lys-8 and Lys-9. Residues Ser-11–Ala-21 show a composition bias toward low complexity. Lys-15 carries the post-translational modification N6-acetyllysine. The residue at position 25 (Lys-25) is an N6-acetyllysine; alternate. Lys-25 participates in a covalent cross-link: Glycyl lysine isopeptide (Lys-Gly) (interchain with G-Cter in SUMO); alternate. Lys-26 is covalently cross-linked (Glycyl lysine isopeptide (Lys-Gly) (interchain with G-Cter in SUMO)). Lys-134 participates in a covalent cross-link: Glycyl lysine isopeptide (Lys-Gly) (interchain with G-Cter in ubiquitin).

Belongs to the histone H2B family. As to quaternary structure, the nucleosome is a histone octamer containing two molecules each of H2A, H2B, H3 and H4 assembled in one H3-H4 heterotetramer and two H2A-H2B heterodimers. The octamer wraps approximately 147 bp of DNA. Post-translationally, monoubiquitinated by the ubc2-bre1 complex to form H2BK123ub1. H2BK123ub1 gives a specific tag for epigenetic transcriptional activation and is also prerequisite for H3K4me and H3K79me formation. H2BK123ub1 also modulates the formation of double-strand breaks during meiosis and is a prerequisite for DNA-damage checkpoint activation. Acetylated by gcn5 to form H2BK11ac and H2BK16ac. H2BK16ac can also be formed by esa1. Acetylation of N-terminal lysines and particularly formation of H2BK11acK16ac has a positive effect on transcription. In terms of processing, sumoylation to form H2BK6su or H2BK7su, and probably also H2BK16su or H2BK17su, occurs preferentially near the telomeres and represses gene transcription.

The protein resides in the nucleus. The protein localises to the chromosome. In terms of biological role, core component of nucleosome. Nucleosomes wrap and compact DNA into chromatin, limiting DNA accessibility to the cellular machineries which require DNA as a template. Histones thereby play a central role in transcription regulation, DNA repair, DNA replication and chromosomal stability. DNA accessibility is regulated via a complex set of post-translational modifications of histones, also called histone code, and nucleosome remodeling. The chain is Histone H2B (htb1) from Neosartorya fischeri (strain ATCC 1020 / DSM 3700 / CBS 544.65 / FGSC A1164 / JCM 1740 / NRRL 181 / WB 181) (Aspergillus fischerianus).